Reading from the N-terminus, the 371-residue chain is MSLENKNIIITAGGTGGHIYPALAIAELLRQNKANVTWVGTPNSMEASIVPEYFNIQFIKSSGVRRKGIIKKITFPLKLAYNTLKSRSLLKKLKANLVIGFGGYVSGPICLAAAQINIPVIIHEQNAKIGLTNRILAKFATTICLAFEIENLHKQFSSKQLAKTKIVGNPVRKDIVALNDKARIYTDSSTLKILVLGGSQGAKAINEIIPKLIQKSNEQGINIKVWHQTGKLSLEETKDAYKDISQNHIKDIAAFIDDMAIAYNWADLVICRAGALTVSECAIAGLPAIFIPLPSAVDDHQFFNAQNIVNNNAGFCLRQQQMTLENLLAIIKPLNQDRSKLEQMSKMAKKTLIKNSSEQILDCVKKILNNK.

UDP-N-acetyl-alpha-D-glucosamine-binding positions include 15–17 (TGG), Asn-126, Arg-172, Ser-199, Ile-256, 275–280 (ALTVSE), and Gln-301.

The protein belongs to the glycosyltransferase 28 family. MurG subfamily.

The protein localises to the cell inner membrane. The enzyme catalyses di-trans,octa-cis-undecaprenyl diphospho-N-acetyl-alpha-D-muramoyl-L-alanyl-D-glutamyl-meso-2,6-diaminopimeloyl-D-alanyl-D-alanine + UDP-N-acetyl-alpha-D-glucosamine = di-trans,octa-cis-undecaprenyl diphospho-[N-acetyl-alpha-D-glucosaminyl-(1-&gt;4)]-N-acetyl-alpha-D-muramoyl-L-alanyl-D-glutamyl-meso-2,6-diaminopimeloyl-D-alanyl-D-alanine + UDP + H(+). The protein operates within cell wall biogenesis; peptidoglycan biosynthesis. Functionally, cell wall formation. Catalyzes the transfer of a GlcNAc subunit on undecaprenyl-pyrophosphoryl-MurNAc-pentapeptide (lipid intermediate I) to form undecaprenyl-pyrophosphoryl-MurNAc-(pentapeptide)GlcNAc (lipid intermediate II). In Francisella tularensis subsp. holarctica (strain FTNF002-00 / FTA), this protein is UDP-N-acetylglucosamine--N-acetylmuramyl-(pentapeptide) pyrophosphoryl-undecaprenol N-acetylglucosamine transferase.